The primary structure comprises 355 residues: DNA polymerase IV (355 aa).

Residues 7-188 form the UmuC domain; the sequence is IIHIDMDCFY…LPVRKLFGVG (182 aa). Mg(2+) contacts are provided by aspartate 11 and aspartate 106. The active site involves glutamate 107.

It belongs to the DNA polymerase type-Y family. Monomer. It depends on Mg(2+) as a cofactor.

The protein localises to the cytoplasm. The catalysed reaction is DNA(n) + a 2'-deoxyribonucleoside 5'-triphosphate = DNA(n+1) + diphosphate. Its function is as follows. Poorly processive, error-prone DNA polymerase involved in untargeted mutagenesis. Copies undamaged DNA at stalled replication forks, which arise in vivo from mismatched or misaligned primer ends. These misaligned primers can be extended by PolIV. Exhibits no 3'-5' exonuclease (proofreading) activity. May be involved in translesional synthesis, in conjunction with the beta clamp from PolIII. The polypeptide is DNA polymerase IV (Legionella pneumophila (strain Lens)).